The primary structure comprises 1055 residues: Activated CDC42 kinase 1 (1055 aa).

Residues 1–110 (MQPEEGTGWL…PSPTPGSLPG (110 aa)) are SAM-like domain. Positions 91 to 110 (SQHSQSTFRKPSPTPGSLPG) are disordered. Residue Thr113 is modified to Phosphothreonine. Residues 126–385 (LRLLEKLGDG…PTFVALRDFL (260 aa)) enclose the Protein kinase domain. ATP is bound by residues 132–140 (LGDGSFGVV) and Lys158. Residue Asp252 is the Proton acceptor of the active site. A Phosphotyrosine; by SRC and autocatalysis modification is found at Tyr284. Residues 388–448 (AQPTDMRALQ…PRNVVTSVAG (61 aa)) form the SH3 domain. The region spanning 454–466 (ISQPLQNSFIHTG) is the CRIB domain. The interval 505-548 (RPTQHLGRVKREPPPRPPQPAIFTQKTTYDPVSEDPDPLSSDFK) is disordered. Phosphotyrosine is present on residues Pro518 and Tyr533. The segment at 638–667 (DWDARPLPPPPAYDDVAQDEDDFEVCSINS) is required for interaction with SRC. Positions 647 to 650 (PPAY) are required for interaction with NEDD4. The tract at residues 737–855 (TGQLTPSPTP…QVIQAPGPRA (119 aa)) is disordered. Positions 748-891 (GDDKPQVPPR…PYLERYQRFL (144 aa)) are EBD domain. 2 stretches are compositionally biased toward pro residues: residues 753-764 (QVPPRVPIPPRP) and 787-798 (PASPPRVPPREP). The span at 817 to 827 (PLPHRLSSSPG) shows a compositional bias: low complexity. Residue Tyr842 is modified to Phosphotyrosine. At Arg854 the chain carries Omega-N-methylarginine. Phosphotyrosine occurs at positions 874 and 887. Phosphoserine is present on Ser896. Residues 896-952 (SPEEPAALPVPPLLPPPSTPAPAAPTATVRPMPQAAPDPKANFSTNNSNPGARPPSL) form a disordered region. A compositionally biased stretch (pro residues) spans 903–918 (LPVPPLLPPPSTPAPA). Positions 973–1013 (PADKVQMLQAMVHGVTTEECQAALQSHSWSVQRAAQYLKVE) constitute a UBA domain.

Belongs to the protein kinase superfamily. Tyr protein kinase family. In terms of assembly, homodimer. Interacts with CSPG4 (activated). Interacts with MERTK (activated); stimulates autophosphorylation. May interact (phosphorylated) with HSP90AB1; maintains kinase activity. Interacts with NPHP1. Interacts with SNX9 (via SH3 domain). Interacts with SRC (via SH2 and SH3 domain). Part of a collagen stimulated complex involved in cell migration composed of CDC42, CRK, TNK2 and BCAR1/p130cas. Interacts with BCAR1/p130cas via SH3 domains. Forms complexes with GRB2 and numerous receptor tyrosine kinases (RTK) including LTK, AXL or PDGFRL, in which GRB2 promotes RTK recruitment by TNK2. Interacts with CDC42. Interacts with EGFR, and this interaction is dependent on EGF stimulation and kinase activity of EGFR. Interacts (via kinase domain) with AKT1. Interacts with NEDD4 (via WW3 domain). NEDD4L and EGF promote association with NEDD4. Mg(2+) is required as a cofactor. Post-translationally, autophosphorylation regulates kinase activity. Phosphorylation on Tyr-533 is required for interaction with SRC and is observed during association with clathrin-coated pits. Polyubiquitinated by NEDD4 and NEDD4L. Degradation can be induced by EGF and is lysosome-dependent. In terms of tissue distribution, ubiquitously present in all tissues tested. Highly expressed in the adult central nervous system (CNS); hippocampus, neocortex, and cerebellum, both at dendritic spines and presynaptic axon terminals. Levels are strongly increased during enhanced neural activity.

Its subcellular location is the cell membrane. It localises to the nucleus. The protein resides in the endosome. The protein localises to the cell junction. It is found in the adherens junction. Its subcellular location is the cytoplasmic vesicle membrane. It localises to the cytoplasmic vesicle. The protein resides in the clathrin-coated vesicle. The protein localises to the membrane. It is found in the clathrin-coated pit. Its subcellular location is the cytoplasm. It localises to the cytosol. It catalyses the reaction L-tyrosyl-[protein] + ATP = O-phospho-L-tyrosyl-[protein] + ADP + H(+). The catalysed reaction is L-seryl-[protein] + ATP = O-phospho-L-seryl-[protein] + ADP + H(+). It carries out the reaction L-threonyl-[protein] + ATP = O-phospho-L-threonyl-[protein] + ADP + H(+). Functionally, non-receptor tyrosine-protein and serine/threonine-protein kinase that is implicated in cell spreading and migration, cell survival, cell growth and proliferation. Transduces extracellular signals to cytosolic and nuclear effectors. Phosphorylates AKT1, AR, MCF2, WASL and WWOX. Implicated in trafficking and clathrin-mediated endocytosis through binding to epidermal growth factor receptor (EGFR) and clathrin. Binds to both poly- and mono-ubiquitin and regulates ligand-induced degradation of EGFR, thereby contributing to the accumulation of EGFR at the limiting membrane of early endosomes. Downstream effector of CDC42 which mediates CDC42-dependent cell migration via phosphorylation of BCAR1. May be involved both in adult synaptic function and plasticity and in brain development. Activates AKT1 by phosphorylating it on 'Tyr-176'. Phosphorylates AR on 'Tyr-267' and 'Tyr-363' thereby promoting its recruitment to androgen-responsive enhancers (AREs). Phosphorylates WWOX on 'Tyr-287'. Phosphorylates MCF2, thereby enhancing its activity as a guanine nucleotide exchange factor (GEF) toward Rho family proteins. Contributes to the control of AXL receptor levels. Confers metastatic properties on cancer cells and promotes tumor growth by negatively regulating tumor suppressor such as WWOX and positively regulating pro-survival factors such as AKT1 and AR. The protein is Activated CDC42 kinase 1 (Tnk2) of Mus musculus (Mouse).